A 513-amino-acid chain; its full sequence is Probable DNA ligase (513 aa).

ATP is bound at residue E213. K215 functions as the N6-AMP-lysine intermediate in the catalytic mechanism. ATP-binding residues include R220, R235, E264, F304, R376, and K382.

Belongs to the ATP-dependent DNA ligase family. Mg(2+) is required as a cofactor.

The enzyme catalyses ATP + (deoxyribonucleotide)n-3'-hydroxyl + 5'-phospho-(deoxyribonucleotide)m = (deoxyribonucleotide)n+m + AMP + diphosphate.. Functionally, DNA ligase that seals nicks in double-stranded DNA during DNA replication, DNA recombination and DNA repair. The sequence is that of Probable DNA ligase from Anaeromyxobacter dehalogenans (strain 2CP-1 / ATCC BAA-258).